An 843-amino-acid chain; its full sequence is Protein P (843 aa).

Positions 1–177 (MPLSYPHFRK…FCGSPYSWEQ (177 aa)) are terminal protein domain (TP). Residues 178–346 (ELQHGSTSLN…YCLSHIINLL (169 aa)) are spacer. Residues 284 to 308 (EANPSLSTSKRHTSTGNAVELNPVP) form a disordered region. The polymerase/reverse transcriptase domain (RT) stretch occupies residues 347–690 (EDWGPCYEHG…YMNLYPVARQ (344 aa)). One can recognise a Reverse transcriptase domain in the interval 357 to 600 (QHHIRTPRTP…YNLHFMGYVI (244 aa)). Mg(2+) contacts are provided by Asp-429, Asp-551, and Asp-552.

It belongs to the hepadnaviridae P protein family.

It catalyses the reaction DNA(n) + a 2'-deoxyribonucleoside 5'-triphosphate = DNA(n+1) + diphosphate. The enzyme catalyses Endonucleolytic cleavage to 5'-phosphomonoester.. With respect to regulation, activated by host HSP70 and HSP40 in vitro to be able to bind the epsilon loop of the pgRNA. Because deletion of the RNase H region renders the protein partly chaperone-independent, the chaperones may be needed indirectly to relieve occlusion of the RNA-binding site by this domain. Inhibited by several reverse-transcriptase inhibitors: Lamivudine, Adefovir and Entecavir. Its function is as follows. Multifunctional enzyme that converts the viral RNA genome into dsDNA in viral cytoplasmic capsids. This enzyme displays a DNA polymerase activity that can copy either DNA or RNA templates, and a ribonuclease H (RNase H) activity that cleaves the RNA strand of RNA-DNA heteroduplexes in a partially processive 3'- to 5'-endonucleasic mode. Neo-synthesized pregenomic RNA (pgRNA) are encapsidated together with the P protein, and reverse-transcribed inside the nucleocapsid. Initiation of reverse-transcription occurs first by binding the epsilon loop on the pgRNA genome, and is initiated by protein priming, thereby the 5'-end of (-)DNA is covalently linked to P protein. Partial (+)DNA is synthesized from the (-)DNA template and generates the relaxed circular DNA (RC-DNA) genome. After budding and infection, the RC-DNA migrates in the nucleus, and is converted into a plasmid-like covalently closed circular DNA (cccDNA). The activity of P protein does not seem to be necessary for cccDNA generation, and is presumably released from (+)DNA by host nuclear DNA repair machinery. The chain is Protein P from Homo sapiens (Human).